We begin with the raw amino-acid sequence, 192 residues long: Thymidine kinase (192 aa).

ATP-binding positions include 9 to 16 and 88 to 91; these read SAMNAGKT and DECH. Glutamate 89 acts as the Proton acceptor in catalysis. Zn(2+) is bound by residues cysteine 146, cysteine 148, cysteine 183, and histidine 186.

This sequence belongs to the thymidine kinase family. In terms of assembly, homotetramer.

Its subcellular location is the cytoplasm. The catalysed reaction is thymidine + ATP = dTMP + ADP + H(+). The polypeptide is Thymidine kinase (Blochmanniella floridana).